Reading from the N-terminus, the 464-residue chain is Hydrogen cyanide synthase subunit HcnB (464 aa).

As to quaternary structure, heterotrimer of HcnA, HcnB and HcnC.

Its subcellular location is the cell membrane. The enzyme catalyses glycine + 2 A = hydrogen cyanide + 2 AH2 + CO2. Its activity is regulated as follows. Oxygen is necessary for cyanogenesis. Activated by succinate, glycine methyl ester, glucose and D,L-methionine in addition to glycine. Phenazine methosulfate, methylene blue, 2,6-dichlorophenolindophenol (DCIP) and ferricyanide can replace oxygen for the reaction. Inhibited by pyrrolnitrin and acriflavine at 1 mM concentration. Its function is as follows. A three-component membrane-bound flavoenzyme that catalyzes the formation of hydrogen cyanide, a secondary metabolite, by transfer of electrons to a cyanide-resistant branch of the aerobic respiratory chain. This is Hydrogen cyanide synthase subunit HcnB from Pseudomonas aeruginosa (strain ATCC 15692 / DSM 22644 / CIP 104116 / JCM 14847 / LMG 12228 / 1C / PRS 101 / PAO1).